Consider the following 386-residue polypeptide: MSDMKAIHFGGGNIGRGFVAEFLHKSGYEVVFVDVMDAIINALQQNKSYTVTEVGTSETKSKTIDNYRAINSKTDEDKVVEEIATADIVTCAVGPNILKFIAPVIAKGIENRKKDSPIAVIACENAIGATDTLRKFIEEKLSDSTKSNIQDKARFANSAIDRIVPMQDENAGLNVKIEKFYEWCVESKPFLPSQPPKIEGVHFVEDLTPFIERKLFTVNTGHATAAYYGYNRGKECIHDVLQDKELNEIVRNTLKETAHLIVNKHEISEEDQNQYVEKIIKRISNPVLKDNVERVGRAPLRKLSRNERFIGPAAHLAEMGAKYDALLGGIEMCLRFQNVEGDDESFELAKILKENSSSDATEKITGLERNHTLFPAVEEVVKKVQA.

6 to 17 (AIHFGGGNIGRG) lines the NAD(+) pocket. Lys214 is an active-site residue.

It belongs to the mannitol dehydrogenase family. As to quaternary structure, monomer.

The catalysed reaction is D-mannitol 1-phosphate + NAD(+) = beta-D-fructose 6-phosphate + NADH + H(+). In terms of biological role, catalyzes the NAD(H)-dependent interconversion of D-fructose 6-phosphate and D-mannitol 1-phosphate in the mannitol metabolic pathway. Plays a key role in liamocins biosynthesis by providing the mannitol moity that is linked to 3,5-dihydroxydecanoic acid (provided by the HR-PKS PKS1) via ester bond formation catalyzed by the esterase EST1. The chain is Mannitol-1-phosphate 5-dehydrogenase from Aureobasidium melanogenum (Aureobasidium pullulans var. melanogenum).